The sequence spans 141 residues: ATP synthase epsilon chain (141 aa).

This sequence belongs to the ATPase epsilon chain family. In terms of assembly, F-type ATPases have 2 components, CF(1) - the catalytic core - and CF(0) - the membrane proton channel. CF(1) has five subunits: alpha(3), beta(3), gamma(1), delta(1), epsilon(1). CF(0) has three main subunits: a, b and c.

Its subcellular location is the cell inner membrane. Functionally, produces ATP from ADP in the presence of a proton gradient across the membrane. The chain is ATP synthase epsilon chain from Thioalkalivibrio sulfidiphilus (strain HL-EbGR7).